A 446-amino-acid polypeptide reads, in one-letter code: Histidine--tRNA ligase (446 aa).

Belongs to the class-II aminoacyl-tRNA synthetase family. In terms of assembly, homodimer.

The protein resides in the cytoplasm. It catalyses the reaction tRNA(His) + L-histidine + ATP = L-histidyl-tRNA(His) + AMP + diphosphate + H(+). In Paraburkholderia xenovorans (strain LB400), this protein is Histidine--tRNA ligase.